The following is a 322-amino-acid chain: Formimidoylglutamase (322 aa).

Residues His130, Asp156, His158, Asp160, Cys244, and Asp246 each coordinate Mn(2+).

It belongs to the arginase family. Mn(2+) is required as a cofactor.

It catalyses the reaction N-formimidoyl-L-glutamate + H2O = formamide + L-glutamate. The protein operates within amino-acid degradation; L-histidine degradation into L-glutamate; L-glutamate from N-formimidoyl-L-glutamate (hydrolase route): step 1/1. In terms of biological role, catalyzes the conversion of N-formimidoyl-L-glutamate to L-glutamate and formamide. The sequence is that of Formimidoylglutamase from Geobacillus thermodenitrificans (strain NG80-2).